The chain runs to 1468 residues: DNA polymerase III PolC-type (1468 aa).

Residues 197–217 (QKSLEDSAPPSEEVTPTQNYD) are disordered. Residues 430–586 (YVVFDVETTG…YDAEATGRLL (157 aa)) form the Exonuclease domain.

This sequence belongs to the DNA polymerase type-C family. PolC subfamily.

It is found in the cytoplasm. The enzyme catalyses DNA(n) + a 2'-deoxyribonucleoside 5'-triphosphate = DNA(n+1) + diphosphate. Functionally, required for replicative DNA synthesis. This DNA polymerase also exhibits 3' to 5' exonuclease activity. In Streptococcus agalactiae serotype III (strain NEM316), this protein is DNA polymerase III PolC-type.